Here is a 479-residue protein sequence, read N- to C-terminus: Aspartyl/glutamyl-tRNA(Asn/Gln) amidotransferase subunit B (479 aa).

This sequence belongs to the GatB/GatE family. GatB subfamily. As to quaternary structure, heterotrimer of A, B and C subunits.

The enzyme catalyses L-glutamyl-tRNA(Gln) + L-glutamine + ATP + H2O = L-glutaminyl-tRNA(Gln) + L-glutamate + ADP + phosphate + H(+). It catalyses the reaction L-aspartyl-tRNA(Asn) + L-glutamine + ATP + H2O = L-asparaginyl-tRNA(Asn) + L-glutamate + ADP + phosphate + 2 H(+). Its function is as follows. Allows the formation of correctly charged Asn-tRNA(Asn) or Gln-tRNA(Gln) through the transamidation of misacylated Asp-tRNA(Asn) or Glu-tRNA(Gln) in organisms which lack either or both of asparaginyl-tRNA or glutaminyl-tRNA synthetases. The reaction takes place in the presence of glutamine and ATP through an activated phospho-Asp-tRNA(Asn) or phospho-Glu-tRNA(Gln). The chain is Aspartyl/glutamyl-tRNA(Asn/Gln) amidotransferase subunit B from Geobacter sulfurreducens (strain ATCC 51573 / DSM 12127 / PCA).